The following is a 199-amino-acid chain: Outer-membrane lipoprotein LolB (199 aa).

The first 28 residues, 1–28 (MSVCPAPRSPVRWLHAFTLCLLLAVLAG), serve as a signal peptide directing secretion. The N-palmitoyl cysteine moiety is linked to residue C29. C29 carries S-diacylglycerol cysteine lipidation.

It belongs to the LolB family. In terms of assembly, monomer.

It is found in the cell outer membrane. Its function is as follows. Plays a critical role in the incorporation of lipoproteins in the outer membrane after they are released by the LolA protein. In Bordetella parapertussis (strain 12822 / ATCC BAA-587 / NCTC 13253), this protein is Outer-membrane lipoprotein LolB.